The sequence spans 502 residues: Zinc finger protein 3 homolog (502 aa).

2 stretches are compositionally biased toward basic and acidic residues: residues 1–13 and 80–93; these read MGTENKEVIPKEE and PSSEKDRENNESER. 2 disordered regions span residues 1–26 and 47–103; these read MGTENKEVIPKEEISEESEPHGSLLE and LEGH…NLVT. Residues K6 and K11 each participate in a glycyl lysine isopeptide (Lys-Gly) (interchain with G-Cter in SUMO2) cross-link. C2H2-type zinc fingers lie at residues 141–163, 169–191, 197–219, 225–247, 253–275, 281–303, 309–331, 337–359, 365–387, 393–415, 421–443, 449–471, and 477–499; these read HTCKECGKAFNQNSHLIQHMRVH, FECKECGKTFGTNSSLRRHLRIH, FACNECGKAFIQSSHLIHHHRIH, YKCEECGKAFSQNSALILHQRIH, YECNECGKTFRVSSQLIQHQRIH, HECNECGKAFKHSSGLIRHQKIH, YLCNECGKGFGQSSELIRHQRIH, YECNECGKTFGQNSEIIRHIRIH, YVCKECGKAFRGNSELLRHERIH, YECFECGKAFRRTSHLIVHQRIH, HQCNECARTFWDNSELLLHQKIH, YECSECEKTFSQHSQLIIHQRIH, and YECQECQKTFSRSSHLLRHQSVH.

It belongs to the krueppel C2H2-type zinc-finger protein family.

It is found in the nucleus. May be involved in transcriptional regulation. In Homo sapiens (Human), this protein is Zinc finger protein 3 homolog (ZFP3).